The following is a 108-amino-acid chain: Iron-sulfur cluster assembly protein CyaY (108 aa).

This sequence belongs to the frataxin family.

Its function is as follows. Involved in iron-sulfur (Fe-S) cluster assembly. May act as a regulator of Fe-S biogenesis. This Burkholderia ambifaria (strain MC40-6) protein is Iron-sulfur cluster assembly protein CyaY.